The chain runs to 373 residues: SH3 domain-binding protein 5-like (373 aa).

The disordered stretch occupies residues 1 to 53 (MEGKEGPSCEVRLPTPGAEREGPIHPELGAFGETASNTIKLSESSNDGKKEEI). The segment covering 34 to 45 (TASNTIKLSESS) has biased composition (polar residues). 2 coiled-coil regions span residues 55-98 (EELD…ESAR) and 170-272 (WQEM…SEEI). Disordered regions lie at residues 276–305 (RTQS…TGPP) and 344–373 (TGAV…SVSL). The segment covering 344–358 (TGAVECGGSRERGGD) has biased composition (basic and acidic residues).

Belongs to the SH3BP5 family.

Functionally, functions as a guanine nucleotide exchange factor (GEF) for rab11a. In Xenopus tropicalis (Western clawed frog), this protein is SH3 domain-binding protein 5-like (sh3bp5l).